We begin with the raw amino-acid sequence, 180 residues long: Large ribosomal subunit protein uL5 (180 aa).

The protein belongs to the universal ribosomal protein uL5 family. Part of the 50S ribosomal subunit; part of the 5S rRNA/L5/L18/L25 subcomplex. Contacts the 5S rRNA and the P site tRNA. Forms a bridge to the 30S subunit in the 70S ribosome.

In terms of biological role, this is one of the proteins that bind and probably mediate the attachment of the 5S RNA into the large ribosomal subunit, where it forms part of the central protuberance. In the 70S ribosome it contacts protein S13 of the 30S subunit (bridge B1b), connecting the 2 subunits; this bridge is implicated in subunit movement. Contacts the P site tRNA; the 5S rRNA and some of its associated proteins might help stabilize positioning of ribosome-bound tRNAs. The chain is Large ribosomal subunit protein uL5 from Xanthomonas euvesicatoria pv. vesicatoria (strain 85-10) (Xanthomonas campestris pv. vesicatoria).